The sequence spans 407 residues: Argininosuccinate synthase (407 aa).

ATP is bound by residues 16–24 (AYSGGLDTS) and alanine 44. L-citrulline is bound by residues tyrosine 96 and serine 101. Position 126 (glycine 126) interacts with ATP. The L-aspartate site is built by threonine 128, asparagine 132, and aspartate 133. Asparagine 132 serves as a coordination point for L-citrulline. L-citrulline-binding residues include arginine 136, serine 185, serine 194, glutamate 270, and tyrosine 282.

It belongs to the argininosuccinate synthase family. Type 1 subfamily. In terms of assembly, homotetramer.

The protein localises to the cytoplasm. It carries out the reaction L-citrulline + L-aspartate + ATP = 2-(N(omega)-L-arginino)succinate + AMP + diphosphate + H(+). The protein operates within amino-acid biosynthesis; L-arginine biosynthesis; L-arginine from L-ornithine and carbamoyl phosphate: step 2/3. This chain is Argininosuccinate synthase, found in Shewanella denitrificans (strain OS217 / ATCC BAA-1090 / DSM 15013).